We begin with the raw amino-acid sequence, 175 residues long: Large ribosomal subunit protein uL10 (175 aa).

This sequence belongs to the universal ribosomal protein uL10 family. As to quaternary structure, part of the ribosomal stalk of the 50S ribosomal subunit. The N-terminus interacts with L11 and the large rRNA to form the base of the stalk. The C-terminus forms an elongated spine to which L12 dimers bind in a sequential fashion forming a multimeric L10(L12)X complex.

Functionally, forms part of the ribosomal stalk, playing a central role in the interaction of the ribosome with GTP-bound translation factors. The polypeptide is Large ribosomal subunit protein uL10 (Methylobacterium sp. (strain 4-46)).